Consider the following 456-residue polypeptide: Non-structural protein V (456 aa).

The tract at residues 53-92 is disordered; the sequence is SGESEQVEGGMSKDDGDVERRNLEDLSSTSPTDGTIGKRV. Over residues 63–76 the composition is skewed to basic and acidic residues; sequence MSKDDGDVERRNLE. Serine 257 carries the post-translational modification Phosphoserine; by host. The interval 265–324 is disordered; sequence ISPEDEEPSSVGGKPNESIGRTIEGQSIRDNLQAKDNKSTDVPGAGPKDSAVKEEPPQKR. At serine 350 the chain carries Phosphoserine; by host. Histidine 408, cysteine 427, cysteine 431, cysteine 443, cysteine 445, cysteine 448, cysteine 452, and cysteine 455 together coordinate Zn(2+).

The protein belongs to the paramyxoviruses V protein family. Interacts with host IFIH1/MDA5, DHX58/LGP2, STAT1 and STAT2. Interacts (via N-terminus) with host UBXN1 (via C-terminal UBX domain); this interaction inhibits interferon-alpha/beta (IFN-alpha/beta) production. Interacts with host RIGI regulatory protein (via CARDs domain) and host TRIM25 (via SPRY domain); these interactions prevent TRIM25-mediated ubiquitination of RIG-I and disrupts downstream RIG-I signaling.

The protein resides in the host cytoplasm. Functionally, plays an essential role in the inhibition of host immune response. Prevents the establishment of cellular antiviral state by blocking interferon-alpha/beta (IFN-alpha/beta) production and signaling pathway. Interacts with host IFIH1/MDA5 and DHX58/LGP2 to inhibit the transduction pathway involved in the activation of IFN-beta promoter, thus protecting the virus against cell antiviral state. Blocks the type I interferon signaling pathway by interacting with host STAT1 and STAT2 and thereby inhibiting their phosphorylation and subsequent nuclear translocation. Efficiently blocks the type II interferon signaling pathway. Suppresses interferon induction by interacting with and stabilizing host UBXN1, a negative regulator of both RIG-I-like receptors (RLR) and NF-kappa-B pathways. Blocks the type I interferon signaling pathway by disrupting the RIG-I signaling pathway. The polypeptide is Non-structural protein V (P/V/C) (Cynopterus brachyotis (Lesser short-nosed fruit bat)).